Reading from the N-terminus, the 178-residue chain is Large ribosomal subunit protein uL6 (178 aa).

This sequence belongs to the universal ribosomal protein uL6 family. In terms of assembly, part of the 50S ribosomal subunit.

This protein binds to the 23S rRNA, and is important in its secondary structure. It is located near the subunit interface in the base of the L7/L12 stalk, and near the tRNA binding site of the peptidyltransferase center. The sequence is that of Large ribosomal subunit protein uL6 from Listeria monocytogenes serotype 4a (strain HCC23).